The chain runs to 377 residues: Histone deacetylase 8 (377 aa).

The interval 14–324 is histone deacetylase; the sequence is LVPVYIYSPE…WTYLTGVILG (311 aa). Ser-39 bears the Phosphoserine mark. Asp-101 provides a ligand contact to substrate. His-143 functions as the Proton acceptor in the catalytic mechanism. Substrate is bound at residue Gly-151. Asp-178, His-180, and Asp-267 together coordinate a divalent metal cation. Tyr-306 serves as a coordination point for substrate.

This sequence belongs to the histone deacetylase family. HD type 1 subfamily. Interacts with PEPB2-MYH11, a fusion protein consisting of the 165 N-terminal residues of CBF-beta (PEPB2) with the tail region of MYH11 produced by the inversion Inv(16)(p13q22), a translocation associated with acute myeloid leukemia of M4EO subtype. The PEPB2-MYH1 fusion protein also interacts with RUNX1, a well known transcriptional regulator, suggesting that the interaction with HDAC8 may participate in the conversion of RUNX1 into a constitutive transcriptional repressor. Interacts with CBFA2T3. Interacts with phosphorylated SMG5/EST1B; this interaction protects SMG5 from ubiquitin-mediated degradation. Associates with alpha-SMA (smooth muscle alpha-actin). The cofactor is a divalent metal cation. In terms of processing, phosphorylated by PKA on serine 39. Phosphorylation reduces deacetylase activity observed preferentially on histones H3 and H4. Weakly expressed in most tissues. Expressed at higher level in heart, brain, kidney and pancreas and also in liver, lung, placenta, prostate and kidney.

It localises to the nucleus. The protein resides in the chromosome. Its subcellular location is the cytoplasm. The enzyme catalyses N(6)-acetyl-L-lysyl-[histone] + H2O = L-lysyl-[histone] + acetate. The catalysed reaction is N(6)-acetyl-L-lysyl-[protein] + H2O = L-lysyl-[protein] + acetate. It catalyses the reaction N(6)-(2E)-butenoyl-L-lysyl-[protein] + H2O = (2E)-2-butenoate + L-lysyl-[protein]. Its activity is inhibited by trichostatin A (TSA), suberoylanilide hydroxamic acid (SAHA), 3-(1-methyl-4-phenylacetyl-1H-2-pyrrolyl)-N-hydroxy-2-propenamide (APHA), 4-dimethylamino-N-(6-hydroxycarbamoyethyl)benzamide-N-hydroxy-7-(4-dimethylaminobenzoyl)aminoheptanamide (MS-344), 5-(4-methyl-benzoylamino)-biphenyl-3,4'-dicarboxylic acid 3-dimethylamide 4'-hydroxyamide (CRA-A) and butyrate. Histone deacetylase that catalyzes the deacetylation of lysine residues on the N-terminal part of the core histones (H2A, H2B, H3 and H4). Histone deacetylation gives a tag for epigenetic repression and plays an important role in transcriptional regulation, cell cycle progression and developmental events. Histone deacetylases act via the formation of large multiprotein complexes. Also involved in the deacetylation of cohesin complex protein SMC3 regulating release of cohesin complexes from chromatin. May play a role in smooth muscle cell contractility. In addition to protein deacetylase activity, also has protein-lysine deacylase activity: acts as a protein decrotonylase by mediating decrotonylation ((2E)-butenoyl) of histones. In Homo sapiens (Human), this protein is Histone deacetylase 8.